A 261-amino-acid chain; its full sequence is Protein phosphatase inhibitor 2 (261 aa).

The segment covering 1–16 (MNKDEEFLEEHHYKDD) has biased composition (basic and acidic residues). Residues 1-150 (MNKDEEFLEE…TPYHYYESEE (150 aa)) form a required for binding to pppB region. The tract at residues 1–261 (MNKDEEFLEE…LNANLSDDEQ (261 aa)) is disordered. Positions 17–60 (DAIEGEEEQGEEEESDLDDDMYNIDGETNDDDDDDEAEDEESSE) are enriched in acidic residues. A compositionally biased stretch (polar residues) spans 123-134 (LTINDMNKSSTM). A coiled-coil region spans residues 150-242 (EETDESKKYL…KKFDNLRKAH (93 aa)). Positions 154 to 163 (ESKKYLENKF) are enriched in basic and acidic residues. A compositionally biased stretch (basic residues) spans 195–206 (DKKKKKKNLKIH). The segment covering 212–225 (DDNDDNEDEDEDET) has biased composition (acidic residues). Over residues 226-250 (EEKKENKKKFDNLRKAHYNEFKVVR) the composition is skewed to basic and acidic residues.

It belongs to the protein phosphatase inhibitor 2 family. In terms of assembly, interacts with pppB.

In terms of biological role, inhibitor of protein-phosphatase 1 (PP1). This Dictyostelium discoideum (Social amoeba) protein is Protein phosphatase inhibitor 2 (dpiA).